The following is a 401-amino-acid chain: Propionate kinase (401 aa).

Positions 11 and 18 each coordinate ATP. Asn-11 is a binding site for Mg(2+). Arg-86 lines the substrate pocket. The active-site Proton donor/acceptor is Asp-143. ATP-binding positions include His-175, 203–207 (HLGNG), 278–280 (DLR), and 326–330 (GIGEN).

Belongs to the acetokinase family. TdcD subfamily. In terms of assembly, homodimer. Mg(2+) serves as cofactor.

The catalysed reaction is propanoate + ATP = propanoyl phosphate + ADP. Its pathway is amino-acid degradation; L-threonine degradation via propanoate pathway; propanoate from L-threonine: step 4/4. In terms of biological role, catalyzes the conversion of propionyl phosphate and ADP to propionate and ATP. This chain is Propionate kinase, found in Klebsiella pneumoniae (strain 342).